A 76-amino-acid chain; its full sequence is Paralithocin 3 (76 aa).

An N-terminal signal peptide occupies residues 1 to 23 (MGPMKVLLVMLVVMVAAPHIADA). Cystine bridges form between C31/C62, C40/C58, C44/C56, and C49/C59. P74 is modified (proline amide; partial).

It belongs to the paralithocin family. The amidated form is probably the active form.

Functionally, has antibacterial activity, mainly against marine Gram-positive bacteria like C.maltaromaticum (MIC=25 uM), C.mobile (MIC=12.5 uM), C.divergens (MIC=25 uM) and C.funditum (MIC=12.5 uM) but also against C.glutamicum (MIC=12.5 uM). Has very little or no activity against Gram-negative bacteria. In Paralithodes camtschaticus (Red king crab), this protein is Paralithocin 3.